The following is a 525-amino-acid chain: ATP synthase subunit alpha (525 aa).

169–176 (GDRQTGKT) provides a ligand contact to ATP.

It belongs to the ATPase alpha/beta chains family. In terms of assembly, F-type ATPases have 2 components, CF(1) - the catalytic core - and CF(0) - the membrane proton channel. CF(1) has five subunits: alpha(3), beta(3), gamma(1), delta(1), epsilon(1). CF(0) has three main subunits: a(1), b(2) and c(9-12). The alpha and beta chains form an alternating ring which encloses part of the gamma chain. CF(1) is attached to CF(0) by a central stalk formed by the gamma and epsilon chains, while a peripheral stalk is formed by the delta and b chains.

The protein resides in the cell membrane. It catalyses the reaction ATP + H2O + 4 H(+)(in) = ADP + phosphate + 5 H(+)(out). Produces ATP from ADP in the presence of a proton gradient across the membrane. The alpha chain is a regulatory subunit. In Mesoplasma florum (strain ATCC 33453 / NBRC 100688 / NCTC 11704 / L1) (Acholeplasma florum), this protein is ATP synthase subunit alpha.